A 264-amino-acid polypeptide reads, in one-letter code: 3-methyl-2-oxobutanoate hydroxymethyltransferase (264 aa).

Aspartate 45 and aspartate 84 together coordinate Mg(2+). Residues 45–46 (DS), aspartate 84, and lysine 113 contribute to the 3-methyl-2-oxobutanoate site. Position 115 (glutamate 115) interacts with Mg(2+). Glutamate 182 acts as the Proton acceptor in catalysis.

Belongs to the PanB family. In terms of assembly, homodecamer; pentamer of dimers. Mg(2+) serves as cofactor.

The protein localises to the cytoplasm. It carries out the reaction 3-methyl-2-oxobutanoate + (6R)-5,10-methylene-5,6,7,8-tetrahydrofolate + H2O = 2-dehydropantoate + (6S)-5,6,7,8-tetrahydrofolate. It functions in the pathway cofactor biosynthesis; (R)-pantothenate biosynthesis; (R)-pantoate from 3-methyl-2-oxobutanoate: step 1/2. Catalyzes the reversible reaction in which hydroxymethyl group from 5,10-methylenetetrahydrofolate is transferred onto alpha-ketoisovalerate to form ketopantoate. This Caldicellulosiruptor bescii (strain ATCC BAA-1888 / DSM 6725 / KCTC 15123 / Z-1320) (Anaerocellum thermophilum) protein is 3-methyl-2-oxobutanoate hydroxymethyltransferase.